A 121-amino-acid polypeptide reads, in one-letter code: Large ribosomal subunit protein uL22 (121 aa).

It belongs to the universal ribosomal protein uL22 family. Part of the 50S ribosomal subunit.

In terms of biological role, this protein binds specifically to 23S rRNA; its binding is stimulated by other ribosomal proteins, e.g. L4, L17, and L20. It is important during the early stages of 50S assembly. It makes multiple contacts with different domains of the 23S rRNA in the assembled 50S subunit and ribosome. The globular domain of the protein is located near the polypeptide exit tunnel on the outside of the subunit, while an extended beta-hairpin is found that lines the wall of the exit tunnel in the center of the 70S ribosome. The sequence is that of Large ribosomal subunit protein uL22 from Rickettsia massiliae (strain Mtu5).